A 446-amino-acid chain; its full sequence is MVISRSNYRNICSYTFFMVNLFILILSVINEGFCEIAYVIISVSSVLFCVIIICLERQGGFLNPMTFCIISVFFFILIRPVFFSQNITENLNEVITAGLEIDEIYVFYSLAVVNIPLAFTVLLYSVQKGTVSKLVGQLPDLFFYNKQLSMILLWGGLFSAIFLIKSYKKFIILGQVSVFEADAYGLYDELFWFTLSKYCYILSLLFSKNKNFILYSLLIFITSIGYILVGLRGYTIAYGFLLLFFLDIRYRLKIKWLLLVAILVTTISSLFLNYRIGIEVNSGLLGIIFNPLLQQGASFETVYGALKYNEKILSCISYYDYFFTNKDIGSCIDIARGVYFKEGGSFASSFYSELIYLGWIIGSVALLLFAFSLAFVQSCYEKIIKNSMNNKLAYTYRLIIFLALPNLIYFARSSLFDFITKVLFIALFIGGLSIVRHIALNIKKCH.

A run of 11 helical transmembrane segments spans residues 11 to 31, 33 to 53, 58 to 78, 104 to 124, 147 to 167, 186 to 206, 211 to 231, 252 to 272, 355 to 375, 391 to 411, and 415 to 435; these read ICSYTFFMVNLFILILSVINE, FCEIAYVIISVSSVLFCVIII, QGGFLNPMTFCIISVFFFILI, IYVFYSLAVVNIPLAFTVLLY, QLSMILLWGGLFSAIFLIKSY, LYDELFWFTLSKYCYILSLLF, NFILYSLLIFITSIGYILVGL, LKIKWLLLVAILVTTISSLFL, IYLGWIIGSVALLLFAFSLAF, KLAYTYRLIIFLALPNLIYFA, and LFDFITKVLFIALFIGGLSIV.

It localises to the cell inner membrane. The enzyme catalyses n lipid-linked O-antigen repeat units = a lipid-linked O antigen + (n-1) polyisoprenyl diphosphate.. Its pathway is bacterial outer membrane biogenesis; LPS O-antigen biosynthesis. Polymerase involved in the biosynthesis of the lipopolysaccharide (LPS). Catalyzes the polymerization of the O-antigen repeat units on the periplasmic face of the inner membrane, leading to the formation of the lipid-linked O-antigen molecule. In vitro, shows a preference for bacteria-based, undecaprenyl-containing substrates rather than eukaryote-based, dolichol-containing substrates. This chain is O-antigen polymerase, found in Escherichia coli.